The chain runs to 238 residues: uncharacterized protein (238 aa).

The S4 RNA-binding domain occupies 1-64 (MRLDKYLSKS…KPKKNVYLML (64 aa)). Residue D103 is the Nucleophile of the active site.

The protein belongs to the pseudouridine synthase RsuA family.

It carries out the reaction a uridine in RNA = a pseudouridine in RNA. This is an uncharacterized protein from Aquifex aeolicus (strain VF5).